A 330-amino-acid chain; its full sequence is D-lactate dehydrogenase (330 aa).

NAD(+) is bound by residues 156–157 (RI), aspartate 176, 206–207 (VP), 233–235 (AAR), and aspartate 259. The active site involves arginine 235. Residue glutamate 264 is part of the active site. Histidine 296 acts as the Proton donor in catalysis.

This sequence belongs to the D-isomer specific 2-hydroxyacid dehydrogenase family.

The catalysed reaction is (R)-lactate + NAD(+) = pyruvate + NADH + H(+). The protein is D-lactate dehydrogenase (ldhD) of Staphylococcus aureus (strain Mu50 / ATCC 700699).